We begin with the raw amino-acid sequence, 769 residues long: Scarecrow-like protein 14 (769 aa).

Disordered stretches follow at residues 1–23, 128–157, 279–320, and 364–388; these read MGSY…DFDL, PSSS…GAFS, TEKK…ERSN, and TAQS…DSKK. Residues 384-765 form the GRAS domain; sequence NDSKKETADL…RIVYASSLWV (382 aa). Positions 391–451 are leucine repeat I (LRI); it reads ADLRTLLVLC…EARLAGTGTQ (61 aa). Positions 470 to 536 are VHIID; that stretch reads YQTYMSVCPF…GGSPKLRITG (67 aa). The short motif at 501 to 505 is the VHIID element; it reads IHIID. Positions 552-584 are leucine repeat II (LRII); that stretch reads ETGHRLARYCQRHNVPFEYNAIAQKWETIQVED. The interval 593-687 is PFYRE; that stretch reads VVVNSLFRFR…KEFYGREIVN (95 aa). The segment at 690-765 is SAW; that stretch reads ACEGTERVER…RIVYASSLWV (76 aa).

The protein belongs to the GRAS family. As to expression, expressed in roots, shoots, flowers and siliques.

The protein resides in the nucleus. In terms of biological role, probable transcription factor involved in plant development. This chain is Scarecrow-like protein 14 (SCL14), found in Arabidopsis thaliana (Mouse-ear cress).